The chain runs to 71 residues: Translation initiation factor IF-1 (71 aa).

Positions 1-71 (MSKDDLIQFT…LTKGRVIHRH (71 aa)) constitute an S1-like domain.

Belongs to the IF-1 family. As to quaternary structure, component of the 30S ribosomal translation pre-initiation complex which assembles on the 30S ribosome in the order IF-2 and IF-3, IF-1 and N-formylmethionyl-tRNA(fMet); mRNA recruitment can occur at any time during PIC assembly.

The protein resides in the cytoplasm. In terms of biological role, one of the essential components for the initiation of protein synthesis. Stabilizes the binding of IF-2 and IF-3 on the 30S subunit to which N-formylmethionyl-tRNA(fMet) subsequently binds. Helps modulate mRNA selection, yielding the 30S pre-initiation complex (PIC). Upon addition of the 50S ribosomal subunit IF-1, IF-2 and IF-3 are released leaving the mature 70S translation initiation complex. This chain is Translation initiation factor IF-1, found in Rickettsia conorii (strain ATCC VR-613 / Malish 7).